We begin with the raw amino-acid sequence, 304 residues long: 17-beta-hydroxysteroid dehydrogenase 13 (304 aa).

The N-terminal stretch at 1–19 is a signal peptide; it reads MNLILEFLLLVGVIIYSYL. Ser33 carries the post-translational modification Phosphoserine. 40 to 67 is an NAD(+) binding site; it reads LITGAGHGIGRLTAYEFAKQKSRLVLWD. N6-acetyllysine is present on Lys79. Residue Ser172 participates in substrate binding. The active-site Proton acceptor is Tyr185. Position 189 (Lys189) interacts with NAD(+). The tract at residues 276 to 304 is disordered; that stretch reads SSKHPHGGSQQPVTPIPGDLTPSSDFLKH.

Belongs to the short-chain dehydrogenases/reductases (SDR) family. As to expression, expressed predominantly in the liver (at protein level).

The protein localises to the lipid droplet. It is found in the endoplasmic reticulum. It catalyses the reaction 17beta-estradiol + NAD(+) = estrone + NADH + H(+). The enzyme catalyses all-trans-retinol + NAD(+) = all-trans-retinal + NADH + H(+). It carries out the reaction all-trans-retinal + NAD(+) + H2O = all-trans-retinoate + NADH + 2 H(+). In terms of biological role, plays a pivotal role in hepatic lipid metabolism. In vitro, it catalyzes the oxidation of a variety of lipid substrates, including 17beta-estradiol, retinol, retinal, and leukotriene B4. The chain is 17-beta-hydroxysteroid dehydrogenase 13 (Hsd17b13) from Mus musculus (Mouse).